We begin with the raw amino-acid sequence, 140 residues long: Putative nickel-responsive regulator 2 (140 aa).

Residues H77, H88, H90, and C96 each contribute to the Ni(2+) site.

This sequence belongs to the transcriptional regulatory CopG/NikR family. It depends on Ni(2+) as a cofactor.

In terms of biological role, transcriptional regulator. This Methanothermobacter thermautotrophicus (strain ATCC 29096 / DSM 1053 / JCM 10044 / NBRC 100330 / Delta H) (Methanobacterium thermoautotrophicum) protein is Putative nickel-responsive regulator 2.